The chain runs to 79 residues: MGGFTSIWHWVIVLLVIVLLFGAKKIPELAKGLGSGIKNFKKAVKDDEEEAKNEPKTLDAQATQTKAHESSEIKSKQES.

The helical transmembrane segment at 1–21 (MGGFTSIWHWVIVLLVIVLLF) threads the bilayer. Positions 48-79 (EEEAKNEPKTLDAQATQTKAHESSEIKSKQES) are disordered. The span at 66–79 (KAHESSEIKSKQES) shows a compositional bias: basic and acidic residues.

Belongs to the TatA/E family. As to quaternary structure, the Tat system comprises two distinct complexes: a TatABC complex, containing multiple copies of TatA, TatB and TatC subunits, and a separate TatA complex, containing only TatA subunits. Substrates initially bind to the TatABC complex, which probably triggers association of the separate TatA complex to form the active translocon.

It is found in the cell inner membrane. In terms of biological role, part of the twin-arginine translocation (Tat) system that transports large folded proteins containing a characteristic twin-arginine motif in their signal peptide across membranes. TatA could form the protein-conducting channel of the Tat system. The polypeptide is Sec-independent protein translocase protein TatA (Helicobacter pylori (strain P12)).